The primary structure comprises 102 residues: MHIDIMHYLIVSALMFTIGIAGIFLNRKNVIIILMSIELILLSVNLNFVAFSAFLHDLVGQVFALFILTVAAAEAAIGLAILVVFFRNRGSIAVEDVNVMKG.

Helical transmembrane passes span 5 to 25, 31 to 51, and 66 to 86; these read IMHY…GIFL, IIIL…FVAF, and FILT…VVFF.

Belongs to the complex I subunit 4L family. NDH-1 is composed of 14 different subunits. Subunits NuoA, H, J, K, L, M, N constitute the membrane sector of the complex.

Its subcellular location is the cell inner membrane. It carries out the reaction a quinone + NADH + 5 H(+)(in) = a quinol + NAD(+) + 4 H(+)(out). In terms of biological role, NDH-1 shuttles electrons from NADH, via FMN and iron-sulfur (Fe-S) centers, to quinones in the respiratory chain. The immediate electron acceptor for the enzyme in this species is believed to be ubiquinone. Couples the redox reaction to proton translocation (for every two electrons transferred, four hydrogen ions are translocated across the cytoplasmic membrane), and thus conserves the redox energy in a proton gradient. The chain is NADH-quinone oxidoreductase subunit K from Bartonella henselae (strain ATCC 49882 / DSM 28221 / CCUG 30454 / Houston 1) (Rochalimaea henselae).